The sequence spans 42 residues: Photosystem I reaction center subunit IX (42 aa).

Residues 8 to 28 form a helical membrane-spanning segment; the sequence is YLSTIPVVGAIWLTFTAGFII.

The protein belongs to the PsaJ family.

The protein resides in the plastid. Its subcellular location is the chloroplast thylakoid membrane. Its function is as follows. May help in the organization of the PsaE and PsaF subunits. This is Photosystem I reaction center subunit IX from Gracilaria tenuistipitata var. liui (Red alga).